Here is a 464-residue protein sequence, read N- to C-terminus: Serine/threonine-protein kinase 38-like (464 aa).

A2 is modified (N-acetylalanine). The interval 63-88 (KKLRRSQHARKETEFLRLKRTRLGLD) is S100B binding. Phosphothreonine is present on T75. The Protein kinase domain maps to 90–383 (FESLKVIGRG…VEEIKGHPFF (294 aa)). ATP contacts are provided by residues 96–104 (IGRGAFGEV) and K119. Residue D213 is the Proton acceptor of the active site. At S282 the chain carries Phosphoserine; by autocatalysis. The AGC-kinase C-terminal domain occupies 384-453 (EGVDWEHIRE…KRFEGLTQRG (70 aa)). Phosphothreonine; by STK24/MST3 is present on T442.

The protein belongs to the protein kinase superfamily. AGC Ser/Thr protein kinase family. Homodimeric S100B binds two molecules of STK38L. Interacts with MICAL1; leading to inhibit the protein kinase activity by antagonizing activation by MST1/STK4. Interacts with MOB1 and MOB2. The cofactor is Mg(2+). Ubiquitously expressed with highest levels observed in the thymus.

Its subcellular location is the cytoplasm. The protein resides in the cytoskeleton. It is found in the membrane. The enzyme catalyses L-seryl-[protein] + ATP = O-phospho-L-seryl-[protein] + ADP + H(+). It carries out the reaction L-threonyl-[protein] + ATP = O-phospho-L-threonyl-[protein] + ADP + H(+). Its activity is regulated as follows. Activated by binding of S100B which releases autoinhibitory N-lobe interactions, enabling ATP to bind and the autophosphorylation of Ser-282. Thr-442 then undergoes calcium-dependent phosphorylation by STK24/MST3. Interactions between phosphorylated Thr-442 and the N-lobe promote additional structural changes that complete the activation of the kinase. Autoinhibition is also released by the binding of MOB1/MOBKL1A and MOB2/HCCA2 to the N-terminal of STK38L. Its function is as follows. Involved in the regulation of structural processes in differentiating and mature neuronal cells. The protein is Serine/threonine-protein kinase 38-like of Homo sapiens (Human).